Consider the following 560-residue polypeptide: Protein DA1-related 7 (560 aa).

UIM domains lie at 43-62 (SEAD…QETS), 92-111 (EEDQ…KGKS), and 155-174 (NEDA…KGQI). In terms of domain architecture, LIM zinc-binding spans 199 to 269 (SICDGCKSAI…HVCKKKFPGR (71 aa)).

As to quaternary structure, interacts with ubiquitin.

Ubiquitin receptor that probably regulates developmental process. The sequence is that of Protein DA1-related 7 (DAR7) from Arabidopsis thaliana (Mouse-ear cress).